The primary structure comprises 337 residues: Structural protein VP9 (337 aa).

It is found in the virion. The protein resides in the host cytoplasm. In Colorado tick fever virus (strain USA/Florio N-7180) (CTFV), this protein is Structural protein VP9.